A 162-amino-acid polypeptide reads, in one-letter code: MTPLFRKAVWLLFAVSVCAFAGSLAAQYVLGMEPCVLCISQRLCVLATALCTAIVLMCRPRRRAGGLFGAVFISIPAVTGISVAAYQLWLQSLPPGTAPSCGAPWTFRLKGWSLFDWFEPVVRGFGNCAEPDYLLGVALPVWSAAYFLAVVLTVWWAWARAK.

Over 1-8 the chain is Cytoplasmic; sequence MTPLFRKA. A helical membrane pass occupies residues 9–25; sequence VWLLFAVSVCAFAGSLA. Topologically, residues 26-43 are periplasmic; that stretch reads AQYVLGMEPCVLCISQRL. Cysteines 35 and 38 form a disulfide. A helical membrane pass occupies residues 44-60; the sequence is CVLATALCTAIVLMCRP. The Cytoplasmic segment spans residues 61–67; sequence RRRAGGL. The helical transmembrane segment at 68 to 85 threads the bilayer; sequence FGAVFISIPAVTGISVAA. Topologically, residues 86 to 141 are periplasmic; it reads YQLWLQSLPPGTAPSCGAPWTFRLKGWSLFDWFEPVVRGFGNCAEPDYLLGVALPV. A disulfide bridge links Cys101 with Cys128. The chain crosses the membrane as a helical span at residues 142–160; it reads WSAAYFLAVVLTVWWAWAR. Residues 161–162 are Cytoplasmic-facing; it reads AK.

The protein belongs to the DsbB family.

It is found in the cell inner membrane. Its function is as follows. Required for disulfide bond formation in some periplasmic proteins. Acts by oxidizing the DsbA protein. The chain is Disulfide bond formation protein B from Neisseria meningitidis serogroup C / serotype 2a (strain ATCC 700532 / DSM 15464 / FAM18).